The sequence spans 54 residues: Rubredoxin (54 aa).

One can recognise a Rubredoxin-like domain in the interval 1–54 (MKKYVCVVCGYIYDPAEGDPDNGVNPGTSFEDIPDDWVCPLCGVGKDQFEPSEE). Fe cation is bound by residues Cys6, Cys9, Cys39, and Cys42.

The protein belongs to the rubredoxin family. Fe(3+) serves as cofactor.

In terms of biological role, rubredoxin is a small nonheme, iron protein lacking acid-labile sulfide. Its single Fe, chelated to 4 Cys, functions as an electron acceptor and may also stabilize the conformation of the molecule. Functions as an intermediate component in the electron transfer chain: NADH-&gt;NROR-&gt;Rd-&gt;FprA1/2 in which Rd serves as the proximal electron donor to the FDPs that exhibit H(2)O-forming NADH oxidase activity. Also functions as the proximal electron donor to the Dfx and revRbr proteins that display superoxide reductase (SOR) and NADH peroxidase activity, respectively. Therefore, is a key electron carrier in an efficient multienzyme complex that can scavenge O(2) and reactive oxygen species (ROS), and thus plays an important role in the oxidative stress defense system in C.acetobutylicum, an obligate anaerobic bacterium. The polypeptide is Rubredoxin (rd) (Clostridium acetobutylicum (strain ATCC 824 / DSM 792 / JCM 1419 / IAM 19013 / LMG 5710 / NBRC 13948 / NRRL B-527 / VKM B-1787 / 2291 / W)).